We begin with the raw amino-acid sequence, 142 residues long: Large ribosomal subunit protein uL13 (142 aa).

The protein belongs to the universal ribosomal protein uL13 family. As to quaternary structure, part of the 50S ribosomal subunit.

This protein is one of the early assembly proteins of the 50S ribosomal subunit, although it is not seen to bind rRNA by itself. It is important during the early stages of 50S assembly. The chain is Large ribosomal subunit protein uL13 from Teredinibacter turnerae (strain ATCC 39867 / T7901).